We begin with the raw amino-acid sequence, 423 residues long: Histidine--tRNA ligase (423 aa).

The protein belongs to the class-II aminoacyl-tRNA synthetase family. As to quaternary structure, homodimer.

Its subcellular location is the cytoplasm. It carries out the reaction tRNA(His) + L-histidine + ATP = L-histidyl-tRNA(His) + AMP + diphosphate + H(+). In Bacillus cytotoxicus (strain DSM 22905 / CIP 110041 / 391-98 / NVH 391-98), this protein is Histidine--tRNA ligase.